A 101-amino-acid chain; its full sequence is Small ribosomal subunit protein uS14 (101 aa).

This sequence belongs to the universal ribosomal protein uS14 family. In terms of assembly, part of the 30S ribosomal subunit. Contacts proteins S3 and S10.

Functionally, binds 16S rRNA, required for the assembly of 30S particles and may also be responsible for determining the conformation of the 16S rRNA at the A site. This Shewanella frigidimarina (strain NCIMB 400) protein is Small ribosomal subunit protein uS14.